The chain runs to 183 residues: Adenylate kinase (183 aa).

Residue 7-15 participates in ATP binding; the sequence is GVAGVGKTT.

It belongs to the archaeal adenylate kinase family.

The protein localises to the cytoplasm. It carries out the reaction AMP + ATP = 2 ADP. This is Adenylate kinase (adkA) from Thermoplasma acidophilum (strain ATCC 25905 / DSM 1728 / JCM 9062 / NBRC 15155 / AMRC-C165).